Consider the following 672-residue polypeptide: Tubulin--tyrosine ligase-like protein 12 (672 aa).

The TTL domain occupies 332 to 670 (KIKIFLQIFA…LDEIDPTKVT (339 aa)). Residues 480-483 (CEYI), Lys499, and Asp501 each bind ATP.

Belongs to the tubulin--tyrosine ligase family.

Functionally, regulates microtubule dynamics in uterine muscle cells. The protein is Tubulin--tyrosine ligase-like protein 12 of Caenorhabditis briggsae.